Consider the following 205-residue polypeptide: Thiamine-phosphate synthase (205 aa).

4-amino-2-methyl-5-(diphosphooxymethyl)pyrimidine is bound by residues 37–41 and asparagine 69; that span reads QVREK. Residues aspartate 70 and aspartate 89 each contribute to the Mg(2+) site. Serine 108 contributes to the 4-amino-2-methyl-5-(diphosphooxymethyl)pyrimidine binding site. Position 134–136 (134–136) interacts with 2-[(2R,5Z)-2-carboxy-4-methylthiazol-5(2H)-ylidene]ethyl phosphate; the sequence is TGS. Position 137 (lysine 137) interacts with 4-amino-2-methyl-5-(diphosphooxymethyl)pyrimidine. 2-[(2R,5Z)-2-carboxy-4-methylthiazol-5(2H)-ylidene]ethyl phosphate contacts are provided by residues glycine 165 and 185 to 186; that span reads IS.

It belongs to the thiamine-phosphate synthase family. The cofactor is Mg(2+).

It catalyses the reaction 2-[(2R,5Z)-2-carboxy-4-methylthiazol-5(2H)-ylidene]ethyl phosphate + 4-amino-2-methyl-5-(diphosphooxymethyl)pyrimidine + 2 H(+) = thiamine phosphate + CO2 + diphosphate. The enzyme catalyses 2-(2-carboxy-4-methylthiazol-5-yl)ethyl phosphate + 4-amino-2-methyl-5-(diphosphooxymethyl)pyrimidine + 2 H(+) = thiamine phosphate + CO2 + diphosphate. The catalysed reaction is 4-methyl-5-(2-phosphooxyethyl)-thiazole + 4-amino-2-methyl-5-(diphosphooxymethyl)pyrimidine + H(+) = thiamine phosphate + diphosphate. Its pathway is cofactor biosynthesis; thiamine diphosphate biosynthesis; thiamine phosphate from 4-amino-2-methyl-5-diphosphomethylpyrimidine and 4-methyl-5-(2-phosphoethyl)-thiazole: step 1/1. Functionally, condenses 4-methyl-5-(beta-hydroxyethyl)thiazole monophosphate (THZ-P) and 2-methyl-4-amino-5-hydroxymethyl pyrimidine pyrophosphate (HMP-PP) to form thiamine monophosphate (TMP). The chain is Thiamine-phosphate synthase from Clostridium botulinum (strain Langeland / NCTC 10281 / Type F).